The primary structure comprises 222 residues: Probable GTP-binding protein EngB (222 aa).

The EngB-type G domain occupies Asn-23–Gly-217. GTP is bound by residues Gly-31 to Ser-38, Gly-57 to Leu-61, Asp-82 to Gly-85, Thr-152 to Asp-155, and Phe-191 to Ala-193. The Mg(2+) site is built by Ser-38 and Thr-59.

It belongs to the TRAFAC class TrmE-Era-EngA-EngB-Septin-like GTPase superfamily. EngB GTPase family. It depends on Mg(2+) as a cofactor.

Its function is as follows. Necessary for normal cell division and for the maintenance of normal septation. This is Probable GTP-binding protein EngB from Helicobacter hepaticus (strain ATCC 51449 / 3B1).